A 258-amino-acid chain; its full sequence is F-box/SPRY domain-containing protein 1 (258 aa).

Residues 6-54 (TEYAPDIPDNVLELIFSYLKLQDLRNCSLVCKSWNRFLNDENNEVWRAQ) enclose the F-box domain. The B30.2/SPRY domain maps to 64–256 (FKTDLLSVVP…ISMVYLGPPL (193 aa)).

It belongs to the FBXO45/Fsn family. Component of an E3 ubiquitin ligase complex composed of hiw and Fsn.

The protein resides in the synapse. The protein operates within protein modification; protein ubiquitination. In terms of biological role, required in the presynaptic motoneuron to down-regulate the levels of wnd and restrain synaptic terminal growth at the neuromuscular junction (NMJ). The chain is F-box/SPRY domain-containing protein 1 from Aedes aegypti (Yellowfever mosquito).